A 279-amino-acid polypeptide reads, in one-letter code: Probable endonuclease 4 (279 aa).

Zn(2+)-binding residues include H66, H106, E142, D175, H178, H212, D225, H227, and E257.

It belongs to the AP endonuclease 2 family. Zn(2+) is required as a cofactor.

The catalysed reaction is Endonucleolytic cleavage to 5'-phosphooligonucleotide end-products.. Endonuclease IV plays a role in DNA repair. It cleaves phosphodiester bonds at apurinic or apyrimidinic (AP) sites, generating a 3'-hydroxyl group and a 5'-terminal sugar phosphate. This is Probable endonuclease 4 from Moorella thermoacetica (strain ATCC 39073 / JCM 9320).